Reading from the N-terminus, the 526-residue chain is Probable DNA ligase (526 aa).

Residue E228 coordinates ATP. K230 serves as the catalytic N6-AMP-lysine intermediate. Residues R235, R250, E279, F319, R391, and K397 each coordinate ATP.

The protein belongs to the ATP-dependent DNA ligase family. The cofactor is Mg(2+).

It carries out the reaction ATP + (deoxyribonucleotide)n-3'-hydroxyl + 5'-phospho-(deoxyribonucleotide)m = (deoxyribonucleotide)n+m + AMP + diphosphate.. Its function is as follows. DNA ligase that seals nicks in double-stranded DNA during DNA replication, DNA recombination and DNA repair. The protein is Probable DNA ligase of Mycobacterium avium (strain 104).